The chain runs to 503 residues: Aromatase (503 aa).

The substrate site is built by aspartate 309 and methionine 374. Residue cysteine 437 coordinates heme.

It belongs to the cytochrome P450 family. Heme is required as a cofactor.

The protein localises to the membrane. The enzyme catalyses testosterone + 3 reduced [NADPH--hemoprotein reductase] + 3 O2 = 17beta-estradiol + formate + 3 oxidized [NADPH--hemoprotein reductase] + 4 H2O + 4 H(+). It catalyses the reaction androst-4-ene-3,17-dione + 3 reduced [NADPH--hemoprotein reductase] + 3 O2 = estrone + formate + 3 oxidized [NADPH--hemoprotein reductase] + 4 H2O + 4 H(+). Catalyzes the formation of aromatic C18 estrogens from C19 androgens. This Callithrix jacchus (White-tufted-ear marmoset) protein is Aromatase (CYP19A1).